Consider the following 221-residue polypeptide: Probable endo-1,4-beta-xylanase B (221 aa).

An N-terminal signal peptide occupies residues 1-19 (MVSFSSLALALSTVVGVLA). The region spanning 33–221 (QLTHSQTGTK…SSGSATMTVS (189 aa)) is the GH11 domain. The active-site Nucleophile is Glu117. The active-site Proton donor is the Glu208.

It belongs to the glycosyl hydrolase 11 (cellulase G) family.

It localises to the secreted. It carries out the reaction Endohydrolysis of (1-&gt;4)-beta-D-xylosidic linkages in xylans.. It functions in the pathway glycan degradation; xylan degradation. Endo-1,4-beta-xylanase involved in the hydrolysis of xylan, a major structural heterogeneous polysaccharide found in plant biomass representing the second most abundant polysaccharide in the biosphere, after cellulose. This is Probable endo-1,4-beta-xylanase B (xlnB) from Aspergillus clavatus (strain ATCC 1007 / CBS 513.65 / DSM 816 / NCTC 3887 / NRRL 1 / QM 1276 / 107).